We begin with the raw amino-acid sequence, 547 residues long: Undecaprenyl phosphate-alpha-4-amino-4-deoxy-L-arabinose arabinosyl transferase (547 aa).

Helical transmembrane passes span 1–21 (MKLTKWALPLFFLLFYLLPLD), 83–103 (FASAAATGLSALLIVWFALQL), 111–131 (FLAGLIYLSLLIVYGIGTYSV), 174–194 (FLTKGFIALAVPVIVIVPYVI), 205–225 (FGPLAMVSAALLAAPWAIAVH), 253–273 (APFWYYLPMGLLGTLPWLGLL), 286–306 (ISPETLYLLAWVVLPLLFFSV), 311–331 (LLTYILPCFAPLAMLLAASAV), 346–366 (AWLNGLFGLICLAVLAVLALS), 378–398 (GALAVAMVIFAGWALLGFIQL), and 408–428 (SALCPMVLAVGLPWALPQSLI).

Belongs to the glycosyltransferase 83 family.

The protein resides in the cell inner membrane. The catalysed reaction is 4-amino-4-deoxy-alpha-L-arabinopyranosyl di-trans,octa-cis-undecaprenyl phosphate + lipid IVA = lipid IIA + di-trans,octa-cis-undecaprenyl phosphate.. The protein operates within lipopolysaccharide metabolism; 4-amino-4-deoxy-beta-L-arabinose-lipid A biosynthesis. Functionally, catalyzes the transfer of the L-Ara4N moiety of the glycolipid undecaprenyl phosphate-alpha-L-Ara4N to lipid A. The modified arabinose is attached to lipid A and is required for resistance to polymyxin and cationic antimicrobial peptides. In Aeromonas salmonicida (strain A449), this protein is Undecaprenyl phosphate-alpha-4-amino-4-deoxy-L-arabinose arabinosyl transferase.